A 270-amino-acid polypeptide reads, in one-letter code: Phospholysine phosphohistidine inorganic pyrophosphate phosphatase (270 aa).

Mg(2+) is bound by residues Asp14 and Ser16. Substrate contacts are provided by residues 14 to 16 (DVS), 52 to 53 (TN), and Lys187. Mg(2+) is bound at residue Asp212.

Belongs to the HAD-like hydrolase superfamily. It depends on Mg(2+) as a cofactor.

It is found in the cytoplasm. Its subcellular location is the nucleus. It carries out the reaction diphosphate + H2O = 2 phosphate + H(+). Phosphatase that hydrolyzes imidodiphosphate, 3-phosphohistidine and 6-phospholysine. Has broad substrate specificity and can also hydrolyze inorganic diphosphate, but with lower efficiency. The polypeptide is Phospholysine phosphohistidine inorganic pyrophosphate phosphatase (lhpp) (Xenopus laevis (African clawed frog)).